The chain runs to 119 residues: Holo-[acyl-carrier-protein] synthase (119 aa).

Positions 8 and 58 each coordinate Mg(2+).

This sequence belongs to the P-Pant transferase superfamily. AcpS family. Mg(2+) serves as cofactor.

The protein resides in the cytoplasm. The enzyme catalyses apo-[ACP] + CoA = holo-[ACP] + adenosine 3',5'-bisphosphate + H(+). Transfers the 4'-phosphopantetheine moiety from coenzyme A to a Ser of acyl-carrier-protein. The chain is Holo-[acyl-carrier-protein] synthase from Bacillus cereus (strain ZK / E33L).